The primary structure comprises 25 residues: Unknown protein 7 (25 aa).

The tract at residues 1-25 (MENGKVHVASMSGLSMPHMNEMLEK) is disordered.

The polypeptide is Unknown protein 7 (Pseudotsuga menziesii (Douglas-fir)).